The chain runs to 161 residues: 6,7-dimethyl-8-ribityllumazine synthase (161 aa).

5-amino-6-(D-ribitylamino)uracil contacts are provided by residues F23, 61–63 (SFE), and 85–87 (AVI). 90-91 (DT) contributes to the (2S)-2-hydroxy-3-oxobutyl phosphate binding site. Residue H93 is the Proton donor of the active site. Residue F118 participates in 5-amino-6-(D-ribitylamino)uracil binding. (2S)-2-hydroxy-3-oxobutyl phosphate is bound at residue R132.

This sequence belongs to the DMRL synthase family.

It catalyses the reaction (2S)-2-hydroxy-3-oxobutyl phosphate + 5-amino-6-(D-ribitylamino)uracil = 6,7-dimethyl-8-(1-D-ribityl)lumazine + phosphate + 2 H2O + H(+). The protein operates within cofactor biosynthesis; riboflavin biosynthesis; riboflavin from 2-hydroxy-3-oxobutyl phosphate and 5-amino-6-(D-ribitylamino)uracil: step 1/2. Catalyzes the formation of 6,7-dimethyl-8-ribityllumazine by condensation of 5-amino-6-(D-ribitylamino)uracil with 3,4-dihydroxy-2-butanone 4-phosphate. This is the penultimate step in the biosynthesis of riboflavin. This Synechococcus sp. (strain WH7803) protein is 6,7-dimethyl-8-ribityllumazine synthase.